A 95-amino-acid polypeptide reads, in one-letter code: Aspartyl/glutamyl-tRNA(Asn/Gln) amidotransferase subunit C (95 aa).

The protein belongs to the GatC family. As to quaternary structure, heterotrimer of A, B and C subunits.

It carries out the reaction L-glutamyl-tRNA(Gln) + L-glutamine + ATP + H2O = L-glutaminyl-tRNA(Gln) + L-glutamate + ADP + phosphate + H(+). The enzyme catalyses L-aspartyl-tRNA(Asn) + L-glutamine + ATP + H2O = L-asparaginyl-tRNA(Asn) + L-glutamate + ADP + phosphate + 2 H(+). Its function is as follows. Allows the formation of correctly charged Asn-tRNA(Asn) or Gln-tRNA(Gln) through the transamidation of misacylated Asp-tRNA(Asn) or Glu-tRNA(Gln) in organisms which lack either or both of asparaginyl-tRNA or glutaminyl-tRNA synthetases. The reaction takes place in the presence of glutamine and ATP through an activated phospho-Asp-tRNA(Asn) or phospho-Glu-tRNA(Gln). This is Aspartyl/glutamyl-tRNA(Asn/Gln) amidotransferase subunit C from Marinobacter nauticus (strain ATCC 700491 / DSM 11845 / VT8) (Marinobacter aquaeolei).